Consider the following 316-residue polypeptide: 4-diphosphocytidyl-2-C-methyl-D-erythritol kinase (316 aa).

Residue Lys32 is part of the active site. Pro126–Ala136 lines the ATP pocket. Asp168 is a catalytic residue.

The protein belongs to the GHMP kinase family. IspE subfamily.

The enzyme catalyses 4-CDP-2-C-methyl-D-erythritol + ATP = 4-CDP-2-C-methyl-D-erythritol 2-phosphate + ADP + H(+). It participates in isoprenoid biosynthesis; isopentenyl diphosphate biosynthesis via DXP pathway; isopentenyl diphosphate from 1-deoxy-D-xylulose 5-phosphate: step 3/6. Catalyzes the phosphorylation of the position 2 hydroxy group of 4-diphosphocytidyl-2C-methyl-D-erythritol. The polypeptide is 4-diphosphocytidyl-2-C-methyl-D-erythritol kinase (Bifidobacterium longum subsp. infantis (strain ATCC 15697 / DSM 20088 / JCM 1222 / NCTC 11817 / S12)).